A 453-amino-acid chain; its full sequence is tRNA modification GTPase MnmE (453 aa).

The (6S)-5-formyl-5,6,7,8-tetrahydrofolate site is built by R22, E79, and K119. Positions 215–376 (GMKVVIAGRP…LKQHLKSLMG (162 aa)) constitute a TrmE-type G domain. K(+) is bound at residue N225. GTP contacts are provided by residues 225–230 (NAGKSS), 244–250 (TEIAGTT), 269–272 (DTAG), and 334–337 (NKAD). S229 contributes to the Mg(2+) binding site. Positions 244, 246, and 249 each coordinate K(+). T250 serves as a coordination point for Mg(2+). A (6S)-5-formyl-5,6,7,8-tetrahydrofolate-binding site is contributed by K453.

It belongs to the TRAFAC class TrmE-Era-EngA-EngB-Septin-like GTPase superfamily. TrmE GTPase family. Homodimer. Heterotetramer of two MnmE and two MnmG subunits. Requires K(+) as cofactor.

Its subcellular location is the cytoplasm. Its function is as follows. Exhibits a very high intrinsic GTPase hydrolysis rate. Involved in the addition of a carboxymethylaminomethyl (cmnm) group at the wobble position (U34) of certain tRNAs, forming tRNA-cmnm(5)s(2)U34. This Shewanella baltica (strain OS155 / ATCC BAA-1091) protein is tRNA modification GTPase MnmE.